We begin with the raw amino-acid sequence, 221 residues long: Retinitis pigmentosa 9 protein (221 aa).

Composition is skewed to basic and acidic residues over residues 1–10, 17–29, and 60–69; these read MSSRPGREDV, RPRE…LQRR, and IKEDETKPED. Residues 1 to 76 are disordered; that stretch reads MSSRPGREDV…PEDCIPDVPG (76 aa). The segment at 1 to 155 is PIM1-binding; sequence MSSRPGREDV…RDNKRHEKDV (155 aa). The segment at 104 to 122 adopts a CCHC-type zinc-finger fold; that stretch reads QCWRCKRYGHRTGDKECPF. Lys129 participates in a covalent cross-link: Glycyl lysine isopeptide (Lys-Gly) (interchain with G-Cter in SUMO2). Basic and acidic residues predominate over residues 147-156; the sequence is DNKRHEKDVR. Residues 147–221 form a disordered region; that stretch reads DNKRHEKDVR…SKSNEGSDSE (75 aa). The span at 184–212 shows a compositional bias: basic residues; sequence KHKKKKKKEKHKKRKKEKKKKKKRKHKSS. Phosphoserine; by PIM1 occurs at positions 212 and 214.

In terms of assembly, binds to PIM1. Binds to ZNHIT4. In terms of tissue distribution, appears to be expressed in a wide range of tissues.

It is found in the nucleus. Is thought to be a target protein for the PIM1 kinase. May play some roles in B-cell proliferation in association with PIM1. This is Retinitis pigmentosa 9 protein (RP9) from Homo sapiens (Human).